The primary structure comprises 328 residues: Tetraacyldisaccharide 4'-kinase (328 aa).

55 to 62 contacts ATP; that stretch reads TAGGNGKT.

It belongs to the LpxK family.

The enzyme catalyses a lipid A disaccharide + ATP = a lipid IVA + ADP + H(+). Its pathway is glycolipid biosynthesis; lipid IV(A) biosynthesis; lipid IV(A) from (3R)-3-hydroxytetradecanoyl-[acyl-carrier-protein] and UDP-N-acetyl-alpha-D-glucosamine: step 6/6. Functionally, transfers the gamma-phosphate of ATP to the 4'-position of a tetraacyldisaccharide 1-phosphate intermediate (termed DS-1-P) to form tetraacyldisaccharide 1,4'-bis-phosphate (lipid IVA). This chain is Tetraacyldisaccharide 4'-kinase, found in Escherichia coli O17:K52:H18 (strain UMN026 / ExPEC).